The following is a 468-amino-acid chain: Dimethylamine methyltransferase MtbB2 (468 aa).

Position 356 (pyrrolysine 356) is a non-standard amino acid, pyrrolysine.

The protein belongs to the dimethylamine methyltransferase family.

It carries out the reaction Co(I)-[dimethylamine-specific corrinoid protein] + dimethylamine + H(+) = methyl-Co(III)-[dimethylamine-specific corrinoid protein] + methylamine. Its pathway is one-carbon metabolism; methanogenesis from dimethylamine. In terms of biological role, catalyzes the transfer of a methyl group from dimethylamine to the corrinoid cofactor of MtbC. The protein is Dimethylamine methyltransferase MtbB2 (mtbB2) of Methanosarcina acetivorans (strain ATCC 35395 / DSM 2834 / JCM 12185 / C2A).